The following is a 37-amino-acid chain: Large ribosomal subunit protein bL36 (37 aa).

It belongs to the bacterial ribosomal protein bL36 family.

This chain is Large ribosomal subunit protein bL36, found in Nostoc punctiforme (strain ATCC 29133 / PCC 73102).